Reading from the N-terminus, the 585-residue chain is 4-hydroxy-3-methylbut-2-en-1-yl diphosphate synthase (flavodoxin) (585 aa).

4 residues coordinate [4Fe-4S] cluster: Cys-492, Cys-495, Cys-526, and Glu-533.

The protein belongs to the IspG family. [4Fe-4S] cluster is required as a cofactor.

It carries out the reaction (2E)-4-hydroxy-3-methylbut-2-enyl diphosphate + oxidized [flavodoxin] + H2O + 2 H(+) = 2-C-methyl-D-erythritol 2,4-cyclic diphosphate + reduced [flavodoxin]. It participates in isoprenoid biosynthesis; isopentenyl diphosphate biosynthesis via DXP pathway; isopentenyl diphosphate from 1-deoxy-D-xylulose 5-phosphate: step 5/6. Functionally, converts 2C-methyl-D-erythritol 2,4-cyclodiphosphate (ME-2,4cPP) into 1-hydroxy-2-methyl-2-(E)-butenyl 4-diphosphate. This chain is 4-hydroxy-3-methylbut-2-en-1-yl diphosphate synthase (flavodoxin), found in Akkermansia muciniphila (strain ATCC BAA-835 / DSM 22959 / JCM 33894 / BCRC 81048 / CCUG 64013 / CIP 107961 / Muc).